Reading from the N-terminus, the 309-residue chain is MILTVTMNPSIDISYPLDVFKMDTVNRVAEVSKTAGGKGLNVTRVLAEIGDNVAATGLIGGTNGHFLLQHLPQNIQAFFYEIAGDTRNCIAILHEGQQTEILEAGPTIAAEEVNGFLHHYRSLMGATDVVAISGSLPAGLPTEFYVQLVEIAHQFGNKVVLDCSGVALQAALGSPVKPTAIKPNNEELSQLLGREVSKDLNELKEVLSEPLFEGIEWIIVSLGADGAFAKHWDTFYKVDIPKIEVVNPVGSGDSTVAGISSALSHQVDDYSLLKKANVLGMLNAQEKMTGHVNVSKYDNLYNQITVKEV.

Belongs to the carbohydrate kinase PfkB family. LacC subfamily.

The enzyme catalyses D-tagatofuranose 6-phosphate + ATP = D-tagatofuranose 1,6-bisphosphate + ADP + H(+). The protein operates within carbohydrate metabolism; D-tagatose 6-phosphate degradation; D-glyceraldehyde 3-phosphate and glycerone phosphate from D-tagatose 6-phosphate: step 1/2. The chain is Tagatose-6-phosphate kinase 1 from Streptococcus agalactiae serotype III (strain NEM316).